A 479-amino-acid chain; its full sequence is Auxin transporter-like protein 1 (479 aa).

Residues 1-58 lie on the Cytoplasmic side of the membrane; the sequence is MLSEKQGEETMMSSLNETIELNEEREEEKGASPGSGFKNFLWHGGSVYDAWFSCASNQ. A helical transmembrane segment spans residues 59–76; sequence VAQVLLTLPYSFSQLGMI. Over 77-78 the chain is Extracellular; it reads SG. Residues 79–99 traverse the membrane as a helical segment; sequence IIFQVFYGLMGSWTAYLISIL. Over 100–134 the chain is Cytoplasmic; sequence YVEYRSRKEKENVSFKNHVIQWFEVLEGLLGPYWK. The helical transmembrane segment at 135 to 155 threads the bilayer; sequence AIGLAFNCTFLLFGSVIQLIA. At 156 to 171 the chain is on the extracellular side; the sequence is CASNIYYINDHLDKRT. The helical transmembrane segment at 172–192 threads the bilayer; the sequence is WTYIFGACCATTVFIPSFHNY. Residues 193-195 lie on the Cytoplasmic side of the membrane; that stretch reads RIW. The chain crosses the membrane as a helical span at residues 196–216; it reads SFLGLGMTTYTAWYMTIAAIV. Over 217-231 the chain is Extracellular; that stretch reads HGQVENVVHSGPKKM. The helical transmembrane segment at 232 to 252 threads the bilayer; it reads VWYFTGATNILYTFGGHAVTV. At 253-265 the chain is on the cytoplasmic side; sequence EIMHAMWKPQKFK. A helical membrane pass occupies residues 266-286; that stretch reads AIYFFATLYVFTLTLPSAIAV. Over 287 to 313 the chain is Extracellular; that stretch reads YWAFGDQLLDHSNAFSLLPRNAWRDAG. The chain crosses the membrane as a helical span at residues 314-334; the sequence is VILMLIHQFITFGFACTPLYF. Topologically, residues 335 to 355 are cytoplasmic; sequence VWEKVIGMHDTKSIFLRALAR. The helical transmembrane segment at 356–376 threads the bilayer; that stretch reads LPVVIPIWFLAIIFPFFGPIN. Position 377 (S377) is a topological domain, extracellular. A helical transmembrane segment spans residues 378-398; that stretch reads AVGALLVSFTVYVIPASAHML. The Cytoplasmic portion of the chain corresponds to 399–421; it reads TYRSASARQNAAEKLPKVIPSWT. Residues 422 to 442 form a helical membrane-spanning segment; sequence LMYVINAFVVIWVTIVGFGFG. The Extracellular segment spans residues 443–479; the sequence is GWASMTNFIKQVDTFGLFAKCYQCPPKLPASNHTMHH. The N-linked (GlcNAc...) asparagine glycan is linked to N474.

The protein belongs to the amino acid/polyamine transporter 2 family. Amino acid/auxin permease (AAAP) (TC 2.A.18.1) subfamily. Shoots and roots of nodulating plants. Higher levels in roots, flowers and stems, lower in nodules, leaves, petioles and shoot apices.

The protein localises to the cell membrane. Its function is as follows. Carrier protein involved in proton-driven auxin influx. Mediates the formation of auxin gradient from developing leaves (site of auxin biosynthesis) to tips by contributing to the loading of auxin in vascular tissues and facilitating acropetal (base to tip) auxin transport within inner tissues of the root apex, and basipetal (tip to base) auxin transport within outer tissues of the root apex. May be involved in lateral roots and nodules formation. The polypeptide is Auxin transporter-like protein 1 (LAX1) (Medicago truncatula (Barrel medic)).